The chain runs to 432 residues: C(50) beta-cyclic carotenoids biosynthesis protein LbtBC (432 aa).

A beta-cyclase region spans residues 1-140 (MTSLYTTLNL…DDDEVRTPER (140 aa)). The next 3 membrane-spanning stretches (helical) occupy residues 4-24 (LYTT…LLAA), 36-56 (LIGV…FDNI), and 83-103 (FAYA…LTAS). Residues 111-140 (GSPTVSGRGDALLTRAPEPGDDDEVRTPER) form a disordered region. The interval 141-432 (PGTPGLLTTL…IVLWSVLVWS (292 aa)) is elongase/hydratase. 7 consecutive transmembrane segments (helical) span residues 170–190 (YFLA…FFLV), 252–272 (ESSL…AKGL), 277–297 (IPFL…IVGW), 299–319 (IAGA…MLWG), 350–370 (AAVW…LAAA), 374–394 (ASGA…YVGV), and 409–429 (FLVL…WSVL).

It belongs to the UbiA prenyltransferase family. May form a complex with LbtA.

It localises to the cell membrane. The catalysed reaction is all-trans-lycopene + dimethylallyl diphosphate + H2O = dihydroisopentenyldehydrorhodopin + diphosphate. It carries out the reaction isopentenyldehydrorhodopin + dimethylallyl diphosphate + H2O = dihydrobisanhydrobacterioruberin + diphosphate. It participates in carotenoid biosynthesis. In terms of biological role, involved in the biosynthesis of C(50) beta-cyclic carotenoids. The elongase/hydratase domain catalyzes the elongation of lycopene by attaching a C(5) isoprene unit at C-2, as well as the hydroxylation of the previous end of the molecule. The enzyme acts at both ends of the substrate, and catalyzes the conversion of lycopene to the C(45) intermediate dihydroisopentenyldehydrorhodopin (DH-IDR) and the conversion of isopentenyldehydrorhodopin (IDR) to the C(50) carotenoid dihydrobisanhydrobacterioruberin (DH-BABR). The beta-cyclase domain may produce the C(50) beta-cyclic carotenoid C.p.450 from the C(50) carotenoid dihydrobisanhydrobacterioruberin (DH-BABR). This is C(50) beta-cyclic carotenoids biosynthesis protein LbtBC from Dietzia sp. (strain CQ4).